A 401-amino-acid polypeptide reads, in one-letter code: Probable tRNA sulfurtransferase (401 aa).

A THUMP domain is found at 63 to 168; it reads TTAEQALSCL…EREAFLYGAR (106 aa). Residues 186 to 187, 211 to 212, Arg-268, Gly-290, and Gln-299 contribute to the ATP site; these read LL and YF.

The protein belongs to the ThiI family.

It is found in the cytoplasm. It catalyses the reaction [ThiI sulfur-carrier protein]-S-sulfanyl-L-cysteine + a uridine in tRNA + 2 reduced [2Fe-2S]-[ferredoxin] + ATP + H(+) = [ThiI sulfur-carrier protein]-L-cysteine + a 4-thiouridine in tRNA + 2 oxidized [2Fe-2S]-[ferredoxin] + AMP + diphosphate. The catalysed reaction is [ThiS sulfur-carrier protein]-C-terminal Gly-Gly-AMP + S-sulfanyl-L-cysteinyl-[cysteine desulfurase] + AH2 = [ThiS sulfur-carrier protein]-C-terminal-Gly-aminoethanethioate + L-cysteinyl-[cysteine desulfurase] + A + AMP + 2 H(+). The protein operates within cofactor biosynthesis; thiamine diphosphate biosynthesis. Functionally, catalyzes the ATP-dependent transfer of a sulfur to tRNA to produce 4-thiouridine in position 8 of tRNAs, which functions as a near-UV photosensor. Also catalyzes the transfer of sulfur to the sulfur carrier protein ThiS, forming ThiS-thiocarboxylate. This is a step in the synthesis of thiazole, in the thiamine biosynthesis pathway. The sulfur is donated as persulfide by IscS. This is Probable tRNA sulfurtransferase from Treponema pallidum subsp. pallidum (strain SS14).